The primary structure comprises 324 residues: Beta-ketoacyl-[acyl-carrier-protein] synthase III (324 aa).

Catalysis depends on residues Cys112 and His249. The ACP-binding stretch occupies residues 250–254; that stretch reads QANRR. The active site involves Asn279.

This sequence belongs to the thiolase-like superfamily. FabH family. In terms of assembly, homodimer.

It is found in the cytoplasm. It catalyses the reaction malonyl-[ACP] + acetyl-CoA + H(+) = 3-oxobutanoyl-[ACP] + CO2 + CoA. It participates in lipid metabolism; fatty acid biosynthesis. In terms of biological role, catalyzes the condensation reaction of fatty acid synthesis by the addition to an acyl acceptor of two carbons from malonyl-ACP. Catalyzes the first condensation reaction which initiates fatty acid synthesis and may therefore play a role in governing the total rate of fatty acid production. Possesses both acetoacetyl-ACP synthase and acetyl transacylase activities. Its substrate specificity determines the biosynthesis of branched-chain and/or straight-chain of fatty acids. The sequence is that of Beta-ketoacyl-[acyl-carrier-protein] synthase III from Streptococcus equi subsp. zooepidemicus (strain MGCS10565).